We begin with the raw amino-acid sequence, 131 residues long: Nuclear envelope phosphatase-regulatory subunit 1 homolog (131 aa).

2 consecutive transmembrane segments (helical) span residues 33–53 (LLAV…WYWL) and 68–88 (WIHP…ILGI).

The protein belongs to the CNEP1R1 family.

Its subcellular location is the nucleus membrane. It localises to the cytoplasm. May form with the serine/threonine protein phosphatase l(1)G0269 an active complex dephosphorylating and activating lipin-like phosphatases. Lipins are phosphatidate phosphatases that catalyze the conversion of phosphatidic acid to diacylglycerol and control the metabolism of fatty acids at different levels. The sequence is that of Nuclear envelope phosphatase-regulatory subunit 1 homolog from Drosophila melanogaster (Fruit fly).